The chain runs to 374 residues: Queuine tRNA-ribosyltransferase (374 aa).

Residue D89 is the Proton acceptor of the active site. Substrate-binding positions include 89 to 93 (DSGGF), D143, Q187, and G214. The segment at 245 to 251 (GVGKPED) is RNA binding. The active-site Nucleophile is the D264. Residues 269–273 (TRNAR) form an RNA binding; important for wobble base 34 recognition region. The Zn(2+) site is built by C302, C304, C307, and H333.

The protein belongs to the queuine tRNA-ribosyltransferase family. As to quaternary structure, homodimer. Within each dimer, one monomer is responsible for RNA recognition and catalysis, while the other monomer binds to the replacement base PreQ1. Zn(2+) is required as a cofactor.

It catalyses the reaction 7-aminomethyl-7-carbaguanine + guanosine(34) in tRNA = 7-aminomethyl-7-carbaguanosine(34) in tRNA + guanine. It participates in tRNA modification; tRNA-queuosine biosynthesis. In terms of biological role, catalyzes the base-exchange of a guanine (G) residue with the queuine precursor 7-aminomethyl-7-deazaguanine (PreQ1) at position 34 (anticodon wobble position) in tRNAs with GU(N) anticodons (tRNA-Asp, -Asn, -His and -Tyr). Catalysis occurs through a double-displacement mechanism. The nucleophile active site attacks the C1' of nucleotide 34 to detach the guanine base from the RNA, forming a covalent enzyme-RNA intermediate. The proton acceptor active site deprotonates the incoming PreQ1, allowing a nucleophilic attack on the C1' of the ribose to form the product. After dissociation, two additional enzymatic reactions on the tRNA convert PreQ1 to queuine (Q), resulting in the hypermodified nucleoside queuosine (7-(((4,5-cis-dihydroxy-2-cyclopenten-1-yl)amino)methyl)-7-deazaguanosine). This chain is Queuine tRNA-ribosyltransferase, found in Shewanella baltica (strain OS185).